Consider the following 113-residue polypeptide: UPF0102 protein Ccon26_01140 (113 aa).

The protein belongs to the UPF0102 family.

The protein is UPF0102 protein Ccon26_01140 of Campylobacter concisus (strain 13826).